Reading from the N-terminus, the 162-residue chain is Probable chemoreceptor glutamine deamidase CheD 2 (162 aa).

The protein belongs to the CheD family.

It carries out the reaction L-glutaminyl-[protein] + H2O = L-glutamyl-[protein] + NH4(+). In terms of biological role, probably deamidates glutamine residues to glutamate on methyl-accepting chemotaxis receptors (MCPs), playing an important role in chemotaxis. In Geobacter metallireducens (strain ATCC 53774 / DSM 7210 / GS-15), this protein is Probable chemoreceptor glutamine deamidase CheD 2.